Here is a 311-residue protein sequence, read N- to C-terminus: Acetyl-coenzyme A carboxylase carboxyl transferase subunit alpha (311 aa).

One can recognise a CoA carboxyltransferase C-terminal domain in the interval Asn-36 to Lys-286.

It belongs to the AccA family. As to quaternary structure, acetyl-CoA carboxylase is a heterohexamer composed of biotin carboxyl carrier protein (AccB), biotin carboxylase (AccC) and two subunits each of ACCase subunit alpha (AccA) and ACCase subunit beta (AccD).

The protein localises to the cytoplasm. It carries out the reaction N(6)-carboxybiotinyl-L-lysyl-[protein] + acetyl-CoA = N(6)-biotinyl-L-lysyl-[protein] + malonyl-CoA. Its pathway is lipid metabolism; malonyl-CoA biosynthesis; malonyl-CoA from acetyl-CoA: step 1/1. Functionally, component of the acetyl coenzyme A carboxylase (ACC) complex. First, biotin carboxylase catalyzes the carboxylation of biotin on its carrier protein (BCCP) and then the CO(2) group is transferred by the carboxyltransferase to acetyl-CoA to form malonyl-CoA. This chain is Acetyl-coenzyme A carboxylase carboxyl transferase subunit alpha, found in Campylobacter curvus (strain 525.92).